Consider the following 507-residue polypeptide: MPKYLINFVQQYASFRIHELESVARLFNIDIQYNKEDLEFIESLDPEIETPFLYVTVNSEEDIKKICTRSVLIKSVYSIWAETQLLDEILNELHSKFDKQFLSNYMINKTFKIEVESYGSKYNQKEKLEMMQKLKDSPLWDSGKCLMHPTEEQMDKHILWYILTDFGVERQGLVKDFTLLPRKVYFGQRIAKGNRDDIIKYNLSDRKYLGTTSMDPELSLVSANMGLVKKGHFVLDPFVGTGSFILVASHFGAQTVGCDIDIKAMRKEEDCNLETNFKDHGLTSQFLGTILCDNSCPPWRVNSMFDSIITDPPYGIRAGARKIGFKENRKFVPVPEGLRRDHIPQCIDYSVPDVMADLLELAAKTLIVGGRLVYWLPTTPDYKETDLPRHPCLRLITASCLQILTNRWGRRLVTMEKIIEYNDSIHNKSLLVQEDLGQFDPQHKDLRAVVFWKKMGTNEKTKKKEQKKKSVENHLKSKNNNDVINNNSNDTNSNNNCNNENNIENQK.

Residues 459–475 are compositionally biased toward basic and acidic residues; it reads EKTKKKEQKKKSVENHL. The interval 459–507 is disordered; sequence EKTKKKEQKKKSVENHLKSKNNNDVINNNSNDTNSNNNCNNENNIENQK. Low complexity predominate over residues 480 to 507; sequence NNDVINNNSNDTNSNNNCNNENNIENQK.

It belongs to the class I-like SAM-binding methyltransferase superfamily. TRM11 methyltransferase family. As to quaternary structure, part of the heterodimeric TRMT11-TRM112 methyltransferase complex; this complex forms an active tRNA methyltransferase, where TRMT112 acts as an activator of the catalytic subunit TRMT11.

Its subcellular location is the cytoplasm. The enzyme catalyses guanosine(10) in tRNA + S-adenosyl-L-methionine = N(2)-methylguanosine(10) in tRNA + S-adenosyl-L-homocysteine + H(+). Its function is as follows. Catalytic subunit of the TRMT11-TRM112 methyltransferase complex, that specifically mediates the S-adenosyl-L-methionine-dependent N(2)-methylation of guanosine nucleotide at position 10 (m2G10) in tRNAs. This is one of the major tRNA (guanine-N(2))-methyltransferases. The chain is tRNA (guanine(10)-N(2))-methyltransferase TRMT11 (trmt11) from Dictyostelium discoideum (Social amoeba).